A 308-amino-acid chain; its full sequence is Homogentisate phytyltransferase (308 aa).

Transmembrane regions (helical) follow at residues 13-33 (PHTIIGTTLSVWAVYLLTILG), 44-64 (LDLVFGAWLACLLGNVYIVGL), 104-124 (LAIAWGLGLWLGLTVGISLII), 142-162 (AALCILTVRGIVVNLGLFLFF), 173-193 (ITPIWVLTLFILVFTVAIAIF), 219-241 (VFRGTLILLTGCYLAMAIWGLWA), 245-263 (LNTAFLIVSHLCLLALLWW), and 279-299 (FYQFIWKLFFLEYLLYPLALW).

Belongs to the UbiA prenyltransferase family.

The protein resides in the membrane. The enzyme catalyses phytyl diphosphate + homogentisate + H(+) = 2-methyl-6-phytyl-1,4-benzene-1,4-diol + CO2 + diphosphate. The protein operates within cofactor biosynthesis; tocopherol biosynthesis. Involved in the synthesis of tocopherol (vitamin E). Catalyzes the condensation of homogentisate and phytyl diphosphate to form dimethylphytylhydrquinone. The protein is Homogentisate phytyltransferase of Synechocystis sp. (strain ATCC 27184 / PCC 6803 / Kazusa).